The following is a 147-amino-acid chain: Hemoglobin subunit gamma (147 aa).

Residues 3–147 (HFTAEEKAII…VAIALGHKYH (145 aa)) form the Globin domain. The heme b site is built by histidine 64 and histidine 93.

This sequence belongs to the globin family. As to quaternary structure, heterotetramer of two alpha chains and two gamma chains in fetal hemoglobin (Hb F). In terms of tissue distribution, red blood cells.

Gamma chains make up the fetal hemoglobin F, in combination with alpha chains. The chain is Hemoglobin subunit gamma (HBG) from Cephalopachus bancanus (Western tarsier).